We begin with the raw amino-acid sequence, 878 residues long: Alanine--tRNA ligase (878 aa).

Residues H566, H570, C668, and H672 each contribute to the Zn(2+) site. A disordered region spans residues 846 to 866 (GGGRPDMAQAGGKQPEKLEEA).

The protein belongs to the class-II aminoacyl-tRNA synthetase family. Zn(2+) serves as cofactor.

The protein localises to the cytoplasm. The catalysed reaction is tRNA(Ala) + L-alanine + ATP = L-alanyl-tRNA(Ala) + AMP + diphosphate. Its function is as follows. Catalyzes the attachment of alanine to tRNA(Ala) in a two-step reaction: alanine is first activated by ATP to form Ala-AMP and then transferred to the acceptor end of tRNA(Ala). Also edits incorrectly charged Ser-tRNA(Ala) and Gly-tRNA(Ala) via its editing domain. The sequence is that of Alanine--tRNA ligase from Bacillus pumilus (strain SAFR-032).